Consider the following 348-residue polypeptide: ATPase GET3 (348 aa).

26–33 (KGGVGKTT) provides a ligand contact to ATP. Asp-57 is an active-site residue. Residues Glu-241 and Asn-268 each coordinate ATP. 2 residues coordinate Zn(2+): Cys-280 and Cys-283. 310–312 (PLL) provides a ligand contact to ATP.

It belongs to the arsA ATPase family. Homodimer. Component of the Golgi to ER traffic (GET) complex, which is composed of GET1, GET2 and GET3. Within the complex, GET1 and GET2 form a heterotetramer which is stabilized by phosphatidylinositol binding and which binds to the GET3 homodimer. Interacts with the chloride channel protein GEF1.

It localises to the cytoplasm. It is found in the endoplasmic reticulum. Its subcellular location is the golgi apparatus. ATPase required for the post-translational delivery of tail-anchored (TA) proteins to the endoplasmic reticulum. Recognizes and selectively binds the transmembrane domain of TA proteins in the cytosol. This complex then targets to the endoplasmic reticulum by membrane-bound receptors GET1 and GET2, where the tail-anchored protein is released for insertion. This process is regulated by ATP binding and hydrolysis. ATP binding drives the homodimer towards the closed dimer state, facilitating recognition of newly synthesized TA membrane proteins. ATP hydrolysis is required for insertion. Subsequently, the homodimer reverts towards the open dimer state, lowering its affinity for the GET1-GET2 receptor, and returning it to the cytosol to initiate a new round of targeting. Cooperates with the HDEL receptor ERD2 to mediate the ATP-dependent retrieval of resident ER proteins that contain a C-terminal H-D-E-L retention signal from the Golgi to the ER. Involved in low-level resistance to the oxyanions arsenite and arsenate, and in heat tolerance. This is ATPase GET3 from Debaryomyces hansenii (strain ATCC 36239 / CBS 767 / BCRC 21394 / JCM 1990 / NBRC 0083 / IGC 2968) (Yeast).